Here is a 63-residue protein sequence, read N- to C-terminus: DNA gyrase inhibitor YacG (63 aa).

Zn(2+)-binding residues include cysteine 9, cysteine 12, cysteine 28, and cysteine 32.

The protein belongs to the DNA gyrase inhibitor YacG family. Interacts with GyrB. Zn(2+) is required as a cofactor.

Functionally, inhibits all the catalytic activities of DNA gyrase by preventing its interaction with DNA. Acts by binding directly to the C-terminal domain of GyrB, which probably disrupts DNA binding by the gyrase. The protein is DNA gyrase inhibitor YacG of Salmonella choleraesuis (strain SC-B67).